The primary structure comprises 798 residues: Vacuolar protein sorting-associated protein 53 homolog (798 aa).

This sequence belongs to the VPS53 family. As to quaternary structure, component of the Golgi-associated retrograde protein (GARP) complex, also called VFT (VPS fifty-three) complex, composed of vps-51, vps-52, vps-53 and vps-54. Within the complex interacts with vps-51, vps-52 and vps-54. As to expression, ubiquitously expressed, with particularly strong expression in neuronal cells. Specifically expressed in head and tail neurons and in the pharynx and ventral cord motor neurons.

The protein resides in the golgi apparatus. The protein localises to the trans-Golgi network membrane. It localises to the endosome membrane. It is found in the perikaryon. Its subcellular location is the cytoplasm. The protein resides in the perinuclear region. Its function is as follows. Acts as a component of the GARP complex that is involved in retrograde transport from early and late endosomes to the trans-Golgi network (TGN). The GARP complex facilitates tethering as well as SNARE complex assembly at the Golgi. Plays a role in the trafficking of cargo to dense-core vesicles, probably through association with the EARP-interacting protein eipr-1. Important for neuronal function. This chain is Vacuolar protein sorting-associated protein 53 homolog, found in Caenorhabditis elegans.